The primary structure comprises 455 residues: Chromosomal replication initiator protein DnaA (455 aa).

The segment at 1–73 is domain I, interacts with DnaA modulators; sequence METSLETLWS…RDVVHEILGH (73 aa). The domain II stretch occupies residues 73 to 116; sequence HPVEIQIEIAQGDSNATISAPEVASPPPTASPVENTNTSQRQQA. Positions 92-116 are disordered; that stretch reads APEVASPPPTASPVENTNTSQRQQA. A compositionally biased stretch (polar residues) spans 104-116; the sequence is PVENTNTSQRQQA. The interval 117-333 is domain III, AAA+ region; the sequence is SLNPKYVFSR…GALIRAVAYI (217 aa). Positions 161, 163, 164, and 165 each coordinate ATP. The segment at 334 to 455 is domain IV, binds dsDNA; it reads SISGLPMNVE…GDRIKLANQP (122 aa).

The protein belongs to the DnaA family. In terms of assembly, oligomerizes as a right-handed, spiral filament on DNA at oriC.

The protein resides in the cytoplasm. Plays an essential role in the initiation and regulation of chromosomal replication. ATP-DnaA binds to the origin of replication (oriC) to initiate formation of the DNA replication initiation complex once per cell cycle. Binds the DnaA box (a 9 base pair repeat at the origin) and separates the double-stranded (ds)DNA. Forms a right-handed helical filament on oriC DNA; dsDNA binds to the exterior of the filament while single-stranded (ss)DNA is stabiized in the filament's interior. The ATP-DnaA-oriC complex binds and stabilizes one strand of the AT-rich DNA unwinding element (DUE), permitting loading of DNA polymerase. After initiation quickly degrades to an ADP-DnaA complex that is not apt for DNA replication. Binds acidic phospholipids. The sequence is that of Chromosomal replication initiator protein DnaA from Acaryochloris marina (strain MBIC 11017).